The following is a 146-amino-acid chain: MKLHELKAAEGSRKVRNRVGRGTSSGNGKTSGRGQKGQKSRSGGGVRLGFEGGQTPLFRRMPKRGFSNINTKEYALVNLDQLNVFEDGTEVTPVVLKEAGIVRAEKSGVKILGNGELTKKLTVKAAKFSKSAEAAITAKGGSIEVI.

Over residues 1–13 (MKLHELKAAEGSR) the composition is skewed to basic and acidic residues. A disordered region spans residues 1–61 (MKLHELKAAE…GGQTPLFRRM (61 aa)). 2 stretches are compositionally biased toward gly residues: residues 23–35 (TSSG…GRGQ) and 42–52 (SGGGVRLGFEG).

Belongs to the universal ribosomal protein uL15 family. Part of the 50S ribosomal subunit.

Functionally, binds to the 23S rRNA. The chain is Large ribosomal subunit protein uL15 from Streptococcus uberis (strain ATCC BAA-854 / 0140J).